The chain runs to 515 residues: Sphingolipid 10-desaturase (515 aa).

The helical transmembrane segment at 3 to 23 (AVWALLWALQLGTLVGCALVL) threads the bilayer. In terms of domain architecture, Cytochrome b5 heme-binding spans 46-113 (AKPISDQKAA…DISFVFRVMH (68 aa)). 2 residues coordinate heme: His90 and His113. A helical transmembrane segment spans residues 198-218 (TWLLWNTAVLISIIALSVISM). Positions 245–249 (HDAEH) match the Histidine box-1 motif. A helical transmembrane segment spans residues 258–278 (LNDILGWIYGTVFLGVNGAWW). The Histidine box-2 motif lies at 281 to 286 (EHREHH). 3 helical membrane-spanning segments follow: residues 322 to 342 (IIHFLTNFQHILFLPIIFIVG), 359 to 379 (PWTILGNVCHILLHYAILSQT), and 382 to 402 (PIPVYIIGSLWQAILSLQLLG). A Histidine box-3 motif is present at residues 447–451 (HYSHH).

This sequence belongs to the fatty acid desaturase type 1 family. The cofactor is Fe(2+).

The protein resides in the membrane. It carries out the reaction a (4E,8E)-4-sphinga-4,8-dienine ceramide + 2 Fe(II)-[cytochrome b5] + O2 + 2 H(+) = an N-acyl-(4E,8E,10E)-sphingatrienine + 2 Fe(III)-[cytochrome b5] + 2 H2O. The protein operates within lipid metabolism; sphingolipid metabolism. Functionally, fatty acid desaturase that catalyzes the introduction of the third double bond at the Delta(10) position in d18:3Delta4,8,10 triunsaturated sphingolipid long fatty acid chains. The cytochrome b5 domain probably acts as the direct electron donor to the active site of the desaturase. This chain is Sphingolipid 10-desaturase, found in Thalassiosira pseudonana (Marine diatom).